The following is a 959-amino-acid chain: Protovillin (959 aa).

A tail region spans residues 1 to 53; sequence MEPPLELPTQRKRVIPSKFGILKRNAEIEAEKNRENLQQSSCFSHINEIGKEI. The core stretch occupies residues 54 to 832; sequence GLEIWKIIDD…PIMLPTSGVT (779 aa). 6 Gelsolin-like repeats span residues 64–116, 204–244, 309–366, 479–529, 603–647, and 713–754; these read STIQ…SQET, IRVK…LEKG, IKLY…DQRT, RNKF…EDKG, INIH…KEAA, and FKVF…TEKL. 2 consecutive repeat copies span residues 840-849 and 851-860. Positions 840–860 are 2 X 10 AA repeats of T-P-K-P-I-T-T-P-T-V; that stretch reads TPKPITTPTVTTPKPITTPTV. Residues 895–959 enclose the HP domain; it reads TTITTFYPLS…KQLRVDNGLF (65 aa).

Belongs to the villin/gelsolin family.

Its subcellular location is the cytoplasm. The protein resides in the cytoskeleton. In terms of biological role, caps actin filaments but displays neither severing nor cross-linking nor nucleating activities. Protovillin seems to be a villin precursor with only archaic capping activity. It lacks essential changes in the sequence to allow bundling of actin filaments and consequently the appearance of microvilli. The polypeptide is Protovillin (vilB) (Dictyostelium discoideum (Social amoeba)).